The sequence spans 249 residues: Phycobilisome 27.9 kDa linker polypeptide, phycoerythrin-associated, rod (249 aa).

The PBS-linker domain occupies 2–166 (ASQTILELWP…LDRGPAQIDS (165 aa)). The CpcD-like domain occupies 198–248 (EKRFKILVQGSKFDSPRRISTTEYIVPASKMTPQIQRINRTSGKIVSITEI).

The protein belongs to the phycobilisome linker protein family. As to quaternary structure, the phycobilisome is a hemidiscoidal structure that is composed of two distinct substructures: a core complex and six rods radiating from the core.

The protein localises to the cellular thylakoid membrane. Rod linker protein, associated with phycoerythrin. Linker polypeptides determine the state of aggregation and the location of the disk-shaped phycobiliprotein units within the phycobilisome and modulate their spectroscopic properties in order to mediate a directed and optimal energy transfer. This Microchaete diplosiphon (Fremyella diplosiphon) protein is Phycobilisome 27.9 kDa linker polypeptide, phycoerythrin-associated, rod (cpeD).